Reading from the N-terminus, the 424-residue chain is Enolase (424 aa).

Residue Q165 participates in (2R)-2-phosphoglycerate binding. E207 serves as the catalytic Proton donor. Mg(2+) contacts are provided by D244, E283, and D310. K335, R364, S365, and K386 together coordinate (2R)-2-phosphoglycerate. The Proton acceptor role is filled by K335.

This sequence belongs to the enolase family. Mg(2+) is required as a cofactor.

It localises to the cytoplasm. The protein resides in the secreted. Its subcellular location is the cell surface. The enzyme catalyses (2R)-2-phosphoglycerate = phosphoenolpyruvate + H2O. It participates in carbohydrate degradation; glycolysis; pyruvate from D-glyceraldehyde 3-phosphate: step 4/5. Catalyzes the reversible conversion of 2-phosphoglycerate (2-PG) into phosphoenolpyruvate (PEP). It is essential for the degradation of carbohydrates via glycolysis. In Chlamydia caviae (strain ATCC VR-813 / DSM 19441 / 03DC25 / GPIC) (Chlamydophila caviae), this protein is Enolase.